The sequence spans 596 residues: mRNA export factor mex67 (596 aa).

Phosphoserine occurs at positions 128, 130, and 133. LRR repeat units lie at residues 215–236 (DVIS…TTLA), 241–262 (KLLN…DPWS), and 263–282 (PKTK…PIVT). Residues 283–338 (TFANRAMDYQREMVSRFPKLRLLDGNSINSEIIASQSTVPFPVYQSFFDKVETEQI) enclose the LRRCT domain. An NTF2 domain is found at 338-499 (IVNSFLAAFF…ILIINDLLVI (162 aa)). The TAP-C domain occupies 543 to 596 (DTRQQIVLKIKAETGLNDYYAHMCCEQNNWDYNSALASFLELKSRNVIPAEAFS).

The protein belongs to the NXF family. As to quaternary structure, interacts with mlo3 and rae1.

It is found in the nucleus. It localises to the cytoplasm. In terms of biological role, involved in the export of mRNA from the nucleus to the cytoplasm. This chain is mRNA export factor mex67 (mex67), found in Schizosaccharomyces pombe (strain 972 / ATCC 24843) (Fission yeast).